Here is a 1314-residue protein sequence, read N- to C-terminus: MPLRGVTALSDFRVEKLLQKAAALGLPEVKLSSEFWYFAGSEKALDAATVEKLQALLAAQSVEQTPEAREGLHLFLVTPRLGTISPWASKATNIAENCGLAGIERIERGMAVWLEGALTDEQKQQWAALLHDRMTESVLPDFQTASKLFHHLKSETFSTVDVLGGGKEALVKANTETGLALSADEIDYLVENYQALQRNPSDVELMMFAQANSEHCRHKIFNADFILNGEKQPKSLFGMIRDTHNAHPEGTVVAYKDNSSVIKGAKIERFYPNAAENQGYRFHEEDTHIIMKVETHNHPTAIAPFAGAATGAGGEIRDEGATGKGSRPKAGLTGFTVSNLNIPDLKQPWEQDYGKPEHISSPLDIMIEGPIGGAAFNNEFGRPNLLGYFRTFEEKFDGQVRGYHKPIMIAGGLGSIQAQQTHKDEIPEGALLIQLGGPGMLIGLGGGAASSMDTGTNDASLDFNSVQRGNPEIERRAQEVIDRCWQLGDQNPIISIHDVGAGGLSNAFPELVNDAGRGAVFELREVPLEEHGLTPLQIWCNESQERYVLSILEKDLDTFRAICERERCPFAVVGTATDDGHLKVRDDLFSNNPVDLPLNVLLGKPPKTTRTDKTVTPSKKPFHAGDIDITEAAYRVLRLPAVAAKNFLITIGDRSVGGMTHRDQMVGKYQTPVADCAVTMMGFNTYRGEAMSMGEKPAVALFDAPASGRMCVGEAITNIAAVNIGDIGNIKLSANWMAACGNEGEDEKLYRTVEAVSKACQALDLSIPVGKDSLSMKTVWQDGEEKKSVVSPLSLIISAFAPVKDVRKTVTPELKNVEGSVLLFIDLGFGKARMGGSAFGQVYNNMSGDAPDLDDAGRLKAFYSVIQQLVAEDKLLAYHDRSDGGLFATLAEMAFAARCGISADIDCLMDKFLPIHLPDFQGDPAEDLSDELYNHAAIKILFNEELGAVIQIRQKDRDYVDAAFETAGLTDAVSRIGSPDFDNEFISFFGYGYFLEQNRADLQRAWQETSHAIQRLRDNPACADSEFALIGDNERSALFADVKFDVNEDIAAPFINSGAKPKIAILREQGVNGQIEMAAAFTRAGFDAYDVHMSDLMAGRFRLADFKMLAACGGFSYGDVLGAGEGWAKSILFHPALRDQFAAFFADPNTLTLGVCNGCQMVSNLAEIIPGAETWPKFKRNLSEQFEARLNMVHVPKSASLILNEMQDSSLPVVVSHGEGRADFALHGGNISADLGIALQYVDGQNQVTQTYPLNPNGSPQGIAGITNADGRVTIMMPHPERVYRAAQMSRKPEGWTELSGWYRLFAGARKALG.

ATP contacts are provided by residues 307-318 (GAATGAGGEIRD) and Ala674. Residues Asp675, Glu714, Asn718, and Asp880 each coordinate Mg(2+). Ser882 contacts ATP. The Glutamine amidotransferase type-1 domain maps to 1063–1314 (IAILREQGVN…LFAGARKALG (252 aa)). The active-site Nucleophile is the Cys1156. Catalysis depends on residues His1279 and Glu1281.

In the N-terminal section; belongs to the FGAMS family. In terms of assembly, monomer.

The protein resides in the cytoplasm. The catalysed reaction is N(2)-formyl-N(1)-(5-phospho-beta-D-ribosyl)glycinamide + L-glutamine + ATP + H2O = 2-formamido-N(1)-(5-O-phospho-beta-D-ribosyl)acetamidine + L-glutamate + ADP + phosphate + H(+). It functions in the pathway purine metabolism; IMP biosynthesis via de novo pathway; 5-amino-1-(5-phospho-D-ribosyl)imidazole from N(2)-formyl-N(1)-(5-phospho-D-ribosyl)glycinamide: step 1/2. Phosphoribosylformylglycinamidine synthase involved in the purines biosynthetic pathway. Catalyzes the ATP-dependent conversion of formylglycinamide ribonucleotide (FGAR) and glutamine to yield formylglycinamidine ribonucleotide (FGAM) and glutamate. This is Phosphoribosylformylglycinamidine synthase from Neisseria gonorrhoeae (strain ATCC 700825 / FA 1090).